A 420-amino-acid polypeptide reads, in one-letter code: Tol-Pal system protein TolB (420 aa).

Positions 1–21 are cleaved as a signal peptide; it reads MKLFVHLVLFISLFIPYFTKA.

This sequence belongs to the TolB family. As to quaternary structure, the Tol-Pal system is composed of five core proteins: the inner membrane proteins TolA, TolQ and TolR, the periplasmic protein TolB and the outer membrane protein Pal. They form a network linking the inner and outer membranes and the peptidoglycan layer.

The protein resides in the periplasm. Functionally, part of the Tol-Pal system, which plays a role in outer membrane invagination during cell division and is important for maintaining outer membrane integrity. The sequence is that of Tol-Pal system protein TolB from Wolbachia sp. subsp. Drosophila simulans (strain wRi).